A 266-amino-acid chain; its full sequence is Short-chain dehydrogenase/reductase atnB (266 aa).

Residues I13, D57, and N85 each coordinate NADP(+). Residues S147 and Y166 each act as proton donor in the active site. NADP(+) is bound by residues Y166, K170, V199, and T201. The active-site Lowers pKa of active site Tyr is the K170.

This sequence belongs to the short-chain dehydrogenases/reductases (SDR) family.

It functions in the pathway secondary metabolite biosynthesis; terpenoid biosynthesis. In terms of biological role, short-chain dehydrogenase/reductase; part of the gene cluster that mediates the biosynthesis of the meroterpenoids arthripenoids. The pathway begins with the HR-PKS atnH that catalyzes two chain-extension steps to form a reduced triketide, which then primes the SAT domain in the NR-PKS atnG to initiate three more cycles of extension to give a linear hexaketide corresponding to the polyketide part of arthripenoids. The FAD-dependent monooxygenase atnJ then performs an oxidative decarboxylation at C11 of the atnH/atnG product, via an electrophilic aromatic hydroxylation with concomitant ipso-decarboxylation. The membrane-bound polyprenyl transferase atnF then introduces a farnesyl group before the FAD-dependent monooxygenase atnK functions as the first epoxidase on terminal C12'-C13' olefin, followed by a second epoxidation on C7'-C8' catalyzed by atnA. The terpene cyclase/mutase atnI then initiates the sequential tricyclic ring formation through protonation of the terminal epoxide and catalyzes the regioselective and stereoselective 6/6/6-tricyclic ring formation. The cytochrome P450 monooxygenase atnM is responsible for hydroxylating both C1' and C10'. The next steps may involve ketoreduction and acetyl transfer by the ketoreductase atnB and the acetyltransferase atnC, and lead to the production of arthripenoid B, the final biosynthetic product of the atn cluster. The hydroquinone moiety in arthripenoid B is prone to undergo spontaneous oxidation to afford a benzoquinone compound, a key intermediate for generating structure diversity. For instance, addition of a cysteine followed by ring contraction gives arthripenoid A, tautomerization gives the main product arthripenoid C, addition of a molecular of water or amine affords arthripenoid D or E, respectively, and loss of one water forms arthripenoid F. The polypeptide is Short-chain dehydrogenase/reductase atnB (Arthrinium sp).